Here is a 419-residue protein sequence, read N- to C-terminus: Septin-2 (419 aa).

Positions 40–306 (NGFVFNVMCI…ELYRQKRLEQ (267 aa)) constitute a Septin-type G domain. The G1 motif stretch occupies residues 50–57 (GETGLGKS). Residues 50–57 (GETGLGKS), serine 79, glycine 105, 186–194 (KADTISKVE), glycine 240, and arginine 255 each bind GTP. A G3 motif region spans residues 102–105 (DTVG). The segment at 185–188 (AKAD) is G4 motif. The important for dimerization stretch occupies residues 259-269 (WGTVQVENETH).

Belongs to the TRAFAC class TrmE-Era-EngA-EngB-Septin-like GTPase superfamily. Septin GTPase family. In terms of assembly, may assemble into a multicomponent structure.

The protein localises to the cytoplasm. The protein resides in the cytoskeleton. Its subcellular location is the spindle. Its function is as follows. Involved in cytokinesis. The sequence is that of Septin-2 from Drosophila melanogaster (Fruit fly).